We begin with the raw amino-acid sequence, 261 residues long: MAESHLQSSLITASQFFEIWLHFDADGSGYLEGKELQNLIQELQQARKKAGLELSPEMKTFVDQYGQRDDGKIGIVELAHVLPTEENFLLLFRCQQLKSCEEFMKTWRKYDTDHSGFIETEELKNFLKDLLEKANKTVDDTKLAEYTDLMLKLFDSNNDGKLELTEMARLLPVQENFLLKFQGIKMCGKEFNKAFELYDQDGNGYIDENELDALLKDLCEKNKQDLDINNITTYKKNIMALSDGGKLYRTDLALILCAGDN.

The residue at position 2 (A2) is an N-acetylalanine. The segment at 2-7 (AESHLQ) is interaction with RANBP9. EF-hand domains lie at 11–46 (ITAS…LQQA), 53–88 (ELSP…EENF), 98–133 (KSCE…LLEK), 142–177 (KLAE…QENF), and 186–221 (MCGK…LCEK). 5 residues coordinate Ca(2+): D24, D26, S28, Y30, and E35. Residues D111, D113, S115, E122, D155, N157, D159, K161, E166, D199, D201, N203, Y205, and E210 each contribute to the Ca(2+) site.

Belongs to the calbindin family. Interacts with RANBP9.

In terms of biological role, buffers cytosolic calcium. May stimulate a membrane Ca(2+)-ATPase and a 3',5'-cyclic nucleotide phosphodiesterase. The sequence is that of Calbindin (CALB1) from Homo sapiens (Human).